The chain runs to 332 residues: L-lactate dehydrogenase C chain (332 aa).

Residues 29–57 (GAVG…AVDK) and arginine 99 each bind NAD(+). 3 residues coordinate substrate: arginine 106, asparagine 138, and arginine 169. Asparagine 138 contributes to the NAD(+) binding site. Residue histidine 193 is the Proton acceptor of the active site. Threonine 248 contacts substrate. Residue serine 301 is modified to Phosphoserine.

It belongs to the LDH/MDH superfamily. LDH family. As to quaternary structure, homotetramer. Interacts with RABL2/RABL2A; binds preferentially to GTP-bound RABL2.

The protein resides in the cytoplasm. The enzyme catalyses (S)-lactate + NAD(+) = pyruvate + NADH + H(+). Its pathway is fermentation; pyruvate fermentation to lactate; (S)-lactate from pyruvate: step 1/1. Functionally, possible role in sperm motility. This chain is L-lactate dehydrogenase C chain (LDHC), found in Sus scrofa (Pig).